Consider the following 297-residue polypeptide: Bifonsecin B biosynthesis cluster protein A (297 aa).

Positions 1 to 20 (MHFWWTAISAGLLCLPQALG) are cleaved as a signal peptide. 7 N-linked (GlcNAc...) asparagine glycosylation sites follow: Asn26, Asn56, Asn75, Asn124, Asn175, Asn210, and Asn280.

The protein belongs to the bfoA family.

In terms of biological role, part of the gene cluster that mediates the biosynthesis of bifonsecin B, a dimeric gamma-naphthopyrone. The first step in the biosynthesis of bifonsecin B is the production of gamma-naphthopyrone precursor YWA1 by the non-reducing polyketide synthase albA, via condensation of one acetyl-CoA starter unit with 6 malonyl-CoA units. YWA1 is then methylated by bfoE at position C-6 to yield foncesin which is further methylated at position C-8 by bfoD to produce fonsecin B. A key enzyme in the biosynthetic pathway is the cytochrome P450 monooxygenase bfoB which catalyzes the oxidative dimerization of fonsecin B to bifonsecin B. Bfob also catalyzes the oxidative dimerization of rubrofusarin B into nigerone. The stereoselectivity of bfoB is influenced by the two natural monomeric substrates; homodimerization of fonsecin B yields a stereochemically pure biaryl, M-foncerine B, while rubrofusarin B yields a mixture of enantiomers M- and P-nigerone. The function of bfoA within the bifonsecin B biosynthesis pathway has not been determined yet. This is Bifonsecin B biosynthesis cluster protein A from Aspergillus brasiliensis (strain CBS 101740 / IMI 381727 / IBT 21946).